The sequence spans 566 residues: Bicarbonate transporter BicA (566 aa).

Residues methionine 1 to aspartate 15 lie on the Cytoplasmic side of the membrane. The chain crosses the membrane as a helical span at residues isoleucine 16 to alanine 36. The Periplasmic portion of the chain corresponds to serine 37–glutamate 42. The chain crosses the membrane as a helical span at residues alanine 43 to threonine 63. Residue leucine 64 is a topological domain, cytoplasmic. The chain crosses the membrane as a helical span at residues isoleucine 65 to alanine 85. Position 69 (threonine 69) interacts with hydrogencarbonate. Residues serine 86–glycine 93 lie on the Periplasmic side of the membrane. A helical membrane pass occupies residues leucine 94 to leucine 114. At lysine 115–threonine 126 the chain is on the cytoplasmic side. A helical transmembrane segment spans residues valine 127–phenylalanine 147. The Periplasmic segment spans residues leucine 148 to serine 169. Residues asparagine 170 to proline 190 form a helical membrane-spanning segment. Over glutamate 191–valine 196 the chain is Cytoplasmic. Residues isoleucine 197–proline 217 form a helical membrane-spanning segment. The Periplasmic portion of the chain corresponds to glutamate 218–arginine 247. A helical transmembrane segment spans residues methionine 248 to valine 268. Na(+)-binding residues include aspartate 262, threonine 266, and glycine 304. Residues valine 269–arginine 318 are Cytoplasmic-facing. Alanine 305 contributes to the hydrogencarbonate binding site. A Na(+)-binding site is contributed by threonine 306. A helical transmembrane segment spans residues threonine 319–serine 339. A topological domain (periplasmic) is located at residue leucine 340. The helical transmembrane segment at threonine 341–isoleucine 361 threads the bilayer. The Cytoplasmic portion of the chain corresponds to aspartate 362 to glutamate 371. The helical transmembrane segment at isoleucine 372–leucine 392 threads the bilayer. Residue isoleucine 393 is a topological domain, periplasmic. The helical transmembrane segment at valine 394 to leucine 414 threads the bilayer. Over glutamine 415–glycine 566 the chain is Cytoplasmic. The region spanning lysine 436 to alanine 546 is the STAS domain.

Belongs to the SLC26A/SulP transporter (TC 2.A.53) family.

It localises to the cell inner membrane. Its function is as follows. Low/medium affinity, Na(+)-dependent bicarbonate transporter. This is Bicarbonate transporter BicA (bicA) from Picosynechococcus sp. (strain ATCC 27264 / PCC 7002 / PR-6) (Agmenellum quadruplicatum).